We begin with the raw amino-acid sequence, 361 residues long: UDP-N-acetylglucosamine--N-acetylmuramyl-(pentapeptide) pyrophosphoryl-undecaprenol N-acetylglucosamine transferase (361 aa).

UDP-N-acetyl-alpha-D-glucosamine is bound by residues 11–13 (TGG), N120, R161, S188, and Q282.

This sequence belongs to the glycosyltransferase 28 family. MurG subfamily.

It localises to the cell inner membrane. The enzyme catalyses di-trans,octa-cis-undecaprenyl diphospho-N-acetyl-alpha-D-muramoyl-L-alanyl-D-glutamyl-meso-2,6-diaminopimeloyl-D-alanyl-D-alanine + UDP-N-acetyl-alpha-D-glucosamine = di-trans,octa-cis-undecaprenyl diphospho-[N-acetyl-alpha-D-glucosaminyl-(1-&gt;4)]-N-acetyl-alpha-D-muramoyl-L-alanyl-D-glutamyl-meso-2,6-diaminopimeloyl-D-alanyl-D-alanine + UDP + H(+). It participates in cell wall biogenesis; peptidoglycan biosynthesis. In terms of biological role, cell wall formation. Catalyzes the transfer of a GlcNAc subunit on undecaprenyl-pyrophosphoryl-MurNAc-pentapeptide (lipid intermediate I) to form undecaprenyl-pyrophosphoryl-MurNAc-(pentapeptide)GlcNAc (lipid intermediate II). In Prochlorococcus marinus (strain MIT 9303), this protein is UDP-N-acetylglucosamine--N-acetylmuramyl-(pentapeptide) pyrophosphoryl-undecaprenol N-acetylglucosamine transferase.